The primary structure comprises 1313 residues: Ataxin-2 (1313 aa).

Residues 1 to 12 show a composition bias toward low complexity; the sequence is MRSAAAAPRSPA. A disordered region spans residues 1 to 255; that stretch reads MRSAAAAPRS…RNSNKGLPQS (255 aa). The segment covering 48–65 has biased composition (pro residues); the sequence is GPYPSAAPPPPGPGPPPS. Composition is skewed to low complexity over residues 104 to 114, 141 to 154, 166 to 187, and 204 to 234; these read FVVLLLPLASP, ARPA…ACEP, QQQQ…QQQQ, and LLAS…VAAT. A compositionally biased stretch (gly residues) spans 235–244; that stretch reads SGGGRPGLGR. Ser248 carries the phosphoserine modification. The 78-residue stretch at 267–344 folds into the Sm domain; the sequence is RMVHILTSVV…FVVVQFKDMD (78 aa). Phosphoserine is present on residues Ser393, Ser466, Ser478, Ser508, and Ser554. Basic and acidic residues-rich tracts occupy residues 459–471 and 478–492; these read ALEN…EEKY and SSER…RENK. Disordered regions lie at residues 459 to 954 and 1137 to 1219; these read ALEN…HQQP and NATL…NSFP. Residues 508–544 are compositionally biased toward polar residues; sequence SGRQNSPRMGQPGSGSMPSRSTSHTSDFNPNSGSDQR. Pro residues predominate over residues 552 to 562; sequence WPSPCPSPSSR. The span at 563–581 shows a compositional bias: low complexity; that stretch reads PPSRYQSGPNSLPPRAATP. Pro residues predominate over residues 582–598; the sequence is TRPPSRPPSRPSRPPSH. A Phosphoserine modification is found at Ser624. A compositionally biased stretch (basic residues) spans 627–637; sequence AQRHPRNHRVS. Arg640 carries the asymmetric dimethylarginine; alternate modification. Arg640 carries the omega-N-methylarginine; alternate modification. Ser642 carries the phosphoserine modification. The span at 666-681 shows a compositional bias: low complexity; it reads TSPSGGTWSSVVSGVP. Position 684 is a phosphoserine (Ser684). Polar residues predominate over residues 693-703; it reads PRQNSIGNTPS. Ser728 is subject to Phosphoserine. Thr741 carries the phosphothreonine modification. The span at 768-777 shows a compositional bias: polar residues; the sequence is PNETSPSFSK. 2 positions are modified to phosphoserine: Ser772 and Ser784. Over residues 788-804 the composition is skewed to basic and acidic residues; that stretch reads SEHRKQIDDLKKFKNDF. Over residues 807 to 820 the composition is skewed to polar residues; sequence QPSSTSESMDQLLN. Over residues 821 to 844 the composition is skewed to basic and acidic residues; the sequence is KNREGEKSRDLIKDKIEPSAKDSF. Over residues 847-871 the composition is skewed to low complexity; it reads NSSSNCTSGSSKPNSPSISPSILSN. Phosphoserine occurs at positions 856, 857, 861, 865, 867, 888, and 889. Residues 880-891 are compositionally biased toward polar residues; sequence VTSQGVQTSSPA. Lys893 participates in a covalent cross-link: Glycyl lysine isopeptide (Lys-Gly) (interchain with G-Cter in SUMO2). Basic and acidic residues predominate over residues 893 to 910; sequence KQEKDDKEEKKDAAEQVR. Low complexity-rich tracts occupy residues 925–936 and 1155–1192; these read SFSQPKPSTTPT and GQQQ…QQSA. Residues 1206–1219 show a composition bias toward polar residues; sequence TPASNTQSPQNSFP.

This sequence belongs to the ataxin-2 family. In terms of assembly, monomer. Can also form homodimers. Interacts with TARDBP; the interaction is RNA-dependent. Interacts with RBFOX1. Interacts with polyribosomes. Interacts with SH3GL2 and SH3GL3. Interacts with SH3KBP1 and CBL. Interacts with EGFR. Interacts with ATXN2L. As to expression, expressed in the brain, heart, liver, skeletal muscle, pancreas and placenta. Isoform 1 is predominant in the brain and spinal cord. Isoform 4 is more abundant in the cerebellum. In the brain, broadly expressed in the amygdala, caudate nucleus, corpus callosum, hippocampus, hypothalamus, substantia nigra, subthalamic nucleus and thalamus.

Its subcellular location is the cytoplasm. Involved in EGFR trafficking, acting as negative regulator of endocytic EGFR internalization at the plasma membrane. This is Ataxin-2 (ATXN2) from Homo sapiens (Human).